The primary structure comprises 184 residues: Probable chemoreceptor glutamine deamidase CheD (184 aa).

The protein belongs to the CheD family.

The catalysed reaction is L-glutaminyl-[protein] + H2O = L-glutamyl-[protein] + NH4(+). Probably deamidates glutamine residues to glutamate on methyl-accepting chemotaxis receptors (MCPs), playing an important role in chemotaxis. This Rhizobium rhizogenes (strain K84 / ATCC BAA-868) (Agrobacterium radiobacter) protein is Probable chemoreceptor glutamine deamidase CheD.